We begin with the raw amino-acid sequence, 478 residues long: Ribosomal RNA small subunit methyltransferase F (478 aa).

S-adenosyl-L-methionine is bound by residues 126–132, Glu150, Asp177, and Asp195; that span reads AAAPGSK. Cys248 (nucleophile) is an active-site residue.

The protein belongs to the class I-like SAM-binding methyltransferase superfamily. RsmB/NOP family.

The protein resides in the cytoplasm. The catalysed reaction is cytidine(1407) in 16S rRNA + S-adenosyl-L-methionine = 5-methylcytidine(1407) in 16S rRNA + S-adenosyl-L-homocysteine + H(+). In terms of biological role, specifically methylates the cytosine at position 1407 (m5C1407) of 16S rRNA. The protein is Ribosomal RNA small subunit methyltransferase F of Erwinia tasmaniensis (strain DSM 17950 / CFBP 7177 / CIP 109463 / NCPPB 4357 / Et1/99).